The sequence spans 120 residues: UPF0102 protein TW312 (120 aa).

It belongs to the UPF0102 family.

This is UPF0102 protein TW312 from Tropheryma whipplei (strain TW08/27) (Whipple's bacillus).